The chain runs to 93 residues: Large ribosomal subunit protein uL23cz/uL23cy (93 aa).

The protein belongs to the universal ribosomal protein uL23 family. As to quaternary structure, part of the 50S ribosomal subunit.

It is found in the plastid. The protein localises to the chloroplast. Binds to 23S rRNA. This is Large ribosomal subunit protein uL23cz/uL23cy (rpl23-A) from Platanus occidentalis (Sycamore).